Here is a 100-residue protein sequence, read N- to C-terminus: Small ribosomal subunit protein uS14c (100 aa).

It belongs to the universal ribosomal protein uS14 family. Component of the chloroplast small ribosomal subunit (SSU). Mature 70S chloroplast ribosomes of higher plants consist of a small (30S) and a large (50S) subunit. The 30S small subunit contains 1 molecule of ribosomal RNA (16S rRNA) and 24 different proteins. The 50S large subunit contains 3 rRNA molecules (23S, 5S and 4.5S rRNA) and 33 different proteins.

The protein resides in the plastid. It localises to the chloroplast. Component of the chloroplast ribosome (chloro-ribosome), a dedicated translation machinery responsible for the synthesis of chloroplast genome-encoded proteins, including proteins of the transcription and translation machinery and components of the photosynthetic apparatus. The polypeptide is Small ribosomal subunit protein uS14c (Spinacia oleracea (Spinach)).